The chain runs to 150 residues: Protein ORF35 (150 aa).

This chain is Protein ORF35 (ORF35), found in Homo sapiens (Human).